We begin with the raw amino-acid sequence, 224 residues long: Glutathione S-transferase U28 (224 aa).

Residues 6–85 (SKVVVLDFWA…YIDETWTDAA (80 aa)) enclose the GST N-terminal domain. Residues 16–17 (SP), 42–43 (NK), 56–57 (KV), and 69–70 (ES) contribute to the glutathione site. Residues 91–217 (DPQSRATARF…EKVYQQVLKL (127 aa)) form the GST C-terminal domain. Residue Thr154 is modified to Phosphothreonine.

Belongs to the GST superfamily. Tau family.

The protein localises to the cytoplasm. It localises to the cytosol. It carries out the reaction RX + glutathione = an S-substituted glutathione + a halide anion + H(+). May be involved in the conjugation of reduced glutathione to a wide number of exogenous and endogenous hydrophobic electrophiles and have a detoxification role against certain herbicides. The polypeptide is Glutathione S-transferase U28 (GSTU28) (Arabidopsis thaliana (Mouse-ear cress)).